Reading from the N-terminus, the 896-residue chain is Alanine--tRNA ligase (896 aa).

Positions 574, 578, 677, and 681 each coordinate Zn(2+).

It belongs to the class-II aminoacyl-tRNA synthetase family. Zn(2+) is required as a cofactor.

It localises to the cytoplasm. The catalysed reaction is tRNA(Ala) + L-alanine + ATP = L-alanyl-tRNA(Ala) + AMP + diphosphate. Its function is as follows. Catalyzes the attachment of alanine to tRNA(Ala) in a two-step reaction: alanine is first activated by ATP to form Ala-AMP and then transferred to the acceptor end of tRNA(Ala). Also edits incorrectly charged Ser-tRNA(Ala) and Gly-tRNA(Ala) via its editing domain. In Mycoplasma capricolum subsp. capricolum (strain California kid / ATCC 27343 / NCTC 10154), this protein is Alanine--tRNA ligase.